Reading from the N-terminus, the 377-residue chain is Glutamate 5-kinase (377 aa).

Residue K22 coordinates ATP. Residues S62, D149, and N161 each contribute to the substrate site. Residues 181-182 (TD) and 223-229 (TGGMVTK) contribute to the ATP site. Residues 285–363 (RGTIVVDAGA…AQLKRFLGPQ (79 aa)) form the PUA domain.

This sequence belongs to the glutamate 5-kinase family.

It localises to the cytoplasm. It catalyses the reaction L-glutamate + ATP = L-glutamyl 5-phosphate + ADP. It participates in amino-acid biosynthesis; L-proline biosynthesis; L-glutamate 5-semialdehyde from L-glutamate: step 1/2. Its function is as follows. Catalyzes the transfer of a phosphate group to glutamate to form L-glutamate 5-phosphate. The protein is Glutamate 5-kinase of Bifidobacterium longum (strain DJO10A).